A 317-amino-acid chain; its full sequence is Brain-specific serine protease 4 (317 aa).

A signal peptide spans 1 to 32; the sequence is MVVSGAPPALGGGCLGTFTSLLLLASTAILNA. In terms of domain architecture, Peptidase S1 spans 50-290; sequence VVGGEDSTDS…HRSWVEKIVQ (241 aa). The N-linked (GlcNAc...) asparagine glycan is linked to Asn-70. The cysteines at positions 75 and 91 are disulfide-linked. Active-site charge relay system residues include His-90 and Asp-141. 3 cysteine pairs are disulfide-bonded: Cys-175–Cys-248, Cys-208–Cys-227, and Cys-238–Cys-266. Ser-242 (charge relay system) is an active-site residue.

It belongs to the peptidase S1 family. As to expression, expressed abundantly in the epithelial cells of the airways, including trachea, esophagus and fetal lung. Scarce in adult lung. Expressed at low levels in placenta, pancreas, prostate and thyroid gland.

It is found in the secreted. In terms of biological role, preferentially cleaves the synthetic substrate H-D-Leu-Thr-Arg-pNA compared to tosyl-Gly-Pro-Arg-pNA. This is Brain-specific serine protease 4 (PRSS22) from Homo sapiens (Human).